Reading from the N-terminus, the 503-residue chain is Puromycin resistance protein pur8 (503 aa).

Topologically, residues 1–24 (MARKPDISAVPVESAACQGPDPRR) are cytoplasmic. A helical membrane pass occupies residues 25–45 (WWGLVVILAAQLLVVLDGTVV). The Extracellular portion of the chain corresponds to 46 to 64 (NIALPSVQRDLGMSDTSRQ). Residues 65-85 (WVITAYTLAFGGLLLLGGRVA) form a helical membrane-spanning segment. Residues 86–92 (DAFGRRR) are Cytoplasmic-facing. The chain crosses the membrane as a helical span at residues 93 to 113 (IFAVGILGFGLASLLGGAAPD). At 114 to 122 (PGTLFLARA) the chain is on the extracellular side. The chain crosses the membrane as a helical span at residues 123–143 (LQGVFAAALAPAALALINTLF). Topologically, residues 144–152 (TEPGERGKA) are cytoplasmic. Residues 153-173 (FGVYGAVSGGGAAVGLLAGGL) traverse the membrane as a helical segment. The Extracellular segment spans residues 174–181 (LTEYLDWR). The helical transmembrane segment at 182 to 202 (WCLYVNAPVALLALLGCRLLP) threads the bilayer. Topologically, residues 203–212 (RDRRTGRAVR) are cytoplasmic. A helical membrane pass occupies residues 213 to 233 (LDLPGTLLGCGGLVAIVYAFA). Residues 234-241 (EAESGWGD) lie on the Extracellular side of the membrane. A helical membrane pass occupies residues 242-262 (PLVVRLLVLGVLMLVAFALVE). Over 263–280 (RRVQDPLLPPGVVAHRVR) the chain is Cytoplasmic. The helical transmembrane segment at 281–301 (GGSFLVVGLPQIGLFGLFLFL) threads the bilayer. Residues 302-313 (TYYLQGILDYSP) lie on the Extracellular side of the membrane. Residues 314 to 334 (VLTGVAFLPLGLGIAVGSSLI) form a helical membrane-spanning segment. The Cytoplasmic portion of the chain corresponds to 335 to 346 (AARLLPRTRPRT). The chain crosses the membrane as a helical span at residues 347–367 (LIVGALLAAAAGMALLTRLEP). At 368 to 371 (DTPQ) the chain is on the extracellular side. Residues 372 to 392 (VYLTHLLPAQILIGLGIGCMM) form a helical membrane-spanning segment. Residues 393 to 422 (MPAMHTATARVAPHEAGAAAAVVNSAQQVG) lie on the Cytoplasmic side of the membrane. A helical transmembrane segment spans residues 423-443 (GALGVALLNTVSTGATAAYLA). Residues 444–461 (DHGTSPAATVDGTVHGYT) are Extracellular-facing. A helical membrane pass occupies residues 462–482 (VAIAFAVGVLLLTAVLAWVLI). The Cytoplasmic portion of the chain corresponds to 483 to 503 (DSRTEAADETGSASVTPARPR).

This sequence belongs to the major facilitator superfamily. EmrB family.

It localises to the cell membrane. Its function is as follows. May be involved in active puromycin efflux energized by a proton-dependent electrochemical gradient. In addition, it could be implicated in secreting N-acetylpuromycin, the last intermediate of the puromycin biosynthesis pathway, to the environment. In Streptomyces alboniger, this protein is Puromycin resistance protein pur8 (pur8).